The primary structure comprises 147 residues: Deoxyuridine 5'-triphosphate nucleotidohydrolase (147 aa).

Mg(2+) is bound at residue R24. Residues 68–70 (PRS), 82–85 (GVID), Y88, G93, I95, and R111 each bind dUTP.

This sequence belongs to the dUTPase family.

The enzyme catalyses dUTP + H2O = dUMP + diphosphate + H(+). Its function is as follows. This enzyme is involved in nucleotide metabolism: it produces dUMP, the immediate precursor of thymidine nucleotides and it decreases the intracellular concentration of dUTP so that uracil cannot be incorporated into DNA. This Homo sapiens (Human) protein is Deoxyuridine 5'-triphosphate nucleotidohydrolase (OPG046).